The chain runs to 118 residues: MTREQDLGRRGEEIAAQHLIGRGYTLVERNWRCREGEIDLVMTHAGTTVLVEVKTRAGLGYGHPLEAVTRAKASRLRVLAGLWCQAHPDRRGPVRIDVVGVLWPRGGQPSVEVVRSAC.

It belongs to the UPF0102 family.

This is UPF0102 protein CMM_1377 from Clavibacter michiganensis subsp. michiganensis (strain NCPPB 382).